We begin with the raw amino-acid sequence, 198 residues long: Recombination protein RecR (198 aa).

Residues 57 to 72 form a C4-type zinc finger; that stretch reads CSVCGHITEEDPCYIC. One can recognise a Toprim domain in the interval 80 to 175; it reads SVICVVEDDK…KVTRLAQGLS (96 aa).

Belongs to the RecR family.

Its function is as follows. May play a role in DNA repair. It seems to be involved in an RecBC-independent recombinational process of DNA repair. It may act with RecF and RecO. The protein is Recombination protein RecR of Staphylococcus carnosus (strain TM300).